A 227-amino-acid chain; its full sequence is 2,3-bisphosphoglycerate-dependent phosphoglycerate mutase (227 aa).

Residues 7-14 (RHGFSEWN), 20-21 (TG), Arg-59, 86-89 (ERHY), Lys-97, 113-114 (RR), and 182-183 (GN) each bind substrate. The Tele-phosphohistidine intermediate role is filled by His-8. Glu-86 (proton donor/acceptor) is an active-site residue.

Belongs to the phosphoglycerate mutase family. BPG-dependent PGAM subfamily. Homodimer.

It carries out the reaction (2R)-2-phosphoglycerate = (2R)-3-phosphoglycerate. It participates in carbohydrate degradation; glycolysis; pyruvate from D-glyceraldehyde 3-phosphate: step 3/5. In terms of biological role, catalyzes the interconversion of 2-phosphoglycerate and 3-phosphoglycerate. This chain is 2,3-bisphosphoglycerate-dependent phosphoglycerate mutase, found in Actinobacillus pleuropneumoniae serotype 5b (strain L20).